The following is a 475-amino-acid chain: Gamma-aminobutyric acid receptor subunit gamma-2 (475 aa).

A signal peptide spans 1–39; it reads MSSPNIWSTGSSVYSTPVFSQKMTLWILLLLSLYPGLTR. The Extracellular portion of the chain corresponds to 41–275; the sequence is KSDDDYEDYA…FDLSRRMGYF (235 aa). 2 N-linked (GlcNAc...) asparagine glycosylation sites follow: N52 and N129. A disulfide bridge connects residues C190 and C204. N247 is a glycosylation site (N-linked (GlcNAc...) asparagine). A helical membrane pass occupies residues 276-296; it reads TIQTYIPCTLIVVLSWVSFWI. Topologically, residues 297–302 are cytoplasmic; that stretch reads NKDAVP. The helical transmembrane segment at 303–322 threads the bilayer; that stretch reads ARTSLGITTVLTMTTLSTIA. Topologically, residues 323-334 are extracellular; sequence RKSLPKVSYVTA. Residues 335–359 traverse the membrane as a helical segment; the sequence is MDLFVSVCFIFVFSALVEYGTLHYF. Residues 360 to 451 are Cytoplasmic-facing; the sequence is VSNRKPSKDK…IHIRIAKMDS (92 aa). S382 carries the phosphoserine; by PKC modification. The helical transmembrane segment at 452 to 472 threads the bilayer; the sequence is YARIFFPTAFCLFNLVYWVSY. Residues 473-475 are Extracellular-facing; the sequence is LYL.

This sequence belongs to the ligand-gated ion channel (TC 1.A.9) family. Gamma-aminobutyric acid receptor (TC 1.A.9.5) subfamily. GABRG2 sub-subfamily. In terms of assembly, heteropentamer, formed by a combination of alpha (GABRA1-6), beta (GABRB1-3), gamma (GABRG1-3), delta (GABRD), epsilon (GABRE), rho (GABRR1-3), pi (GABRP) and theta (GABRQ) chains, each subunit exhibiting distinct physiological and pharmacological properties. Interacts with GABARAP. Interacts with KIF21B. Identified in a complex of 720 kDa composed of LHFPL4, NLGN2, GABRA1, GABRB2, GABRG2 and GABRB3. Interacts with LHFPL4. Interacts with SHISA7; interaction leads to the regulation of GABA(A) receptor trafficking, channel deactivation kinetics and pharmacology. Palmitoylated by ZDHHC3/GODZ; required for the accumulation of GABA(A) receptors at the postsynaptic membrane of inhibitory GABAergic synapses. Post-translationally, glycosylated.

The protein localises to the postsynaptic cell membrane. Its subcellular location is the cell membrane. The protein resides in the cell projection. It is found in the dendrite. It localises to the cytoplasmic vesicle membrane. It catalyses the reaction chloride(in) = chloride(out). Allosterically activated by benzodiazepines. Activated by pentobarbital. Inhibited by the antagonist bicuculline. Inhibited by zinc ions. Potentiated by histamine. Functionally, gamma subunit of the heteropentameric ligand-gated chloride channel gated by gamma-aminobutyric acid (GABA), a major inhibitory neurotransmitter in the brain. GABA-gated chloride channels, also named GABA(A) receptors (GABAAR), consist of five subunits arranged around a central pore and contain GABA active binding site(s) located at the alpha and beta subunit interface(s). When activated by GABA, GABAARs selectively allow the flow of chloride anions across the cell membrane down their electrochemical gradient. Gamma-2/GABRG2-containing GABAARs are found at both synaptic and extrasynaptic sites. Chloride influx into the postsynaptic neuron following GABAAR opening decreases the neuron ability to generate a new action potential, thereby reducing nerve transmission. GABAARs containing alpha-1 and beta-2 or -3 subunits exhibit synaptogenic activity; the gamma-2 subunit being necessary but not sufficient to induce rapid synaptic contacts formation. Extrasynaptic gamma-2-containing receptors contribute to the tonic GABAergic inhibition. GABAARs function also as histamine receptor where histamine binds at the interface of two neighboring beta subunits and potentiates GABA response in a gamma-2 subunit-controlled manner. The chain is Gamma-aminobutyric acid receptor subunit gamma-2 (GABRG2) from Bos taurus (Bovine).